The sequence spans 328 residues: Methionyl-tRNA formyltransferase (328 aa).

110–113 (SLLP) contributes to the (6S)-5,6,7,8-tetrahydrofolate binding site.

This sequence belongs to the Fmt family.

It carries out the reaction L-methionyl-tRNA(fMet) + (6R)-10-formyltetrahydrofolate = N-formyl-L-methionyl-tRNA(fMet) + (6S)-5,6,7,8-tetrahydrofolate + H(+). Attaches a formyl group to the free amino group of methionyl-tRNA(fMet). The formyl group appears to play a dual role in the initiator identity of N-formylmethionyl-tRNA by promoting its recognition by IF2 and preventing the misappropriation of this tRNA by the elongation apparatus. This is Methionyl-tRNA formyltransferase from Prochlorococcus marinus (strain MIT 9215).